Reading from the N-terminus, the 316-residue chain is Geminin coiled-coil domain-containing protein 1 (316 aa).

Positions 82-117 (QISANKQLQDTLLQKEEELSRLHEENNKLKEFLNSA) form a coiled coil. 2 stretches are compositionally biased toward polar residues: residues 134 to 155 (GQSSFCTNPNSRVPFSSNSTPG) and 207 to 234 (MSLQPKQDSPSSGYSSAHLTPGHSQAAT). 2 disordered regions span residues 134–160 (GQSSFCTNPNSRVPFSSNSTPGSKAKR) and 207–269 (MSLQ…DVAP). Thr153 carries the phosphothreonine; by cdk2 modification. The segment covering 235 to 252 (SCSLSPSQCSSASLPESE) has biased composition (low complexity). Positions 253–262 (TASPLSSPTY) are enriched in polar residues.

It belongs to the GEMC1 family. As to quaternary structure, interacts with topbp1. Interacts with Cdc45l and the kinase cdk2-cyclin-E (the interaction is direct). In terms of processing, highly phosphorylated by cdk2; stimulates initiation of DNA replication. As to expression, expressed in most tissues. Enriched in proliferating cells from skin and gut.

The protein resides in the nucleus. Regulator of DNA replication. Promotes initiation of chromosomal DNA replication by mediating topbp1- and cdk2-dependent recruitment of cdc45l onto replication origins. The chain is Geminin coiled-coil domain-containing protein 1 (gmnc) from Xenopus laevis (African clawed frog).